The sequence spans 381 residues: Tumor necrosis factor receptor superfamily member 10B (381 aa).

The first 52 residues, Met1–Ala52, serve as a signal peptide directing secretion. TNFR-Cys repeat units follow at residues Pro26–Lys86, Pro87–Cys129, and Arg130–Cys169. Over Asn53–Lys180 the chain is Extracellular. 7 disulfide bridges follow: Cys74–Cys85, Cys88–Cys105, Cys108–Cys121, Cys111–Cys129, Cys131–Cys145, Cys148–Cys161, and Cys151–Cys169. The chain crosses the membrane as a helical span at residues Leu181–Trp201. Residues Lys202–Val381 lie on the Cytoplasmic side of the membrane. The disordered stretch occupies residues His228–Leu260. The span at Thr236–Thr247 shows a compositional bias: low complexity. The region spanning Lys273–Ala356 is the Death domain. Arg293 carries a (Microbial infection) N-beta-linked (GlcNAc) arginine glycan.

As to quaternary structure, monomer. Can interact with TRADD and RIPK1. Three TNFRSF10B molecules interact with the TNFSF10 homotrimer. In the absence of stimulation, interacts with BIRC2, DDX3X and GSK3B. The interaction with BIRC2 and DDX3X is further enhanced upon receptor stimulation and accompanied by DDX3X and BIRC2 cleavage. (Microbial infection) Glycosylated at Arg-293 by S.typhimurium protein Ssek3. As to expression, highly expressed in heart, lung and kidney.

The protein resides in the membrane. Receptor for the cytotoxic ligand TNFSF10/TRAIL. The adapter molecule FADD recruits caspase-8 to the activated receptor. The resulting death-inducing signaling complex (DISC) performs caspase-8 proteolytic activation which initiates the subsequent cascade of caspases (aspartate-specific cysteine proteases) mediating apoptosis. Promotes the activation of NF-kappa-B. Essential for ER stress-induced apoptosis. The sequence is that of Tumor necrosis factor receptor superfamily member 10B (Tnfrsf10b) from Mus musculus (Mouse).